Consider the following 801-residue polypeptide: Leucine--tRNA ligase (801 aa).

A 'HIGH' region motif is present at residues 39–50; the sequence is PYPSGAGIHVGH. Positions 578-582 match the 'KMSKS' region motif; sequence KMSKS. Lys581 contributes to the ATP binding site.

It belongs to the class-I aminoacyl-tRNA synthetase family.

The protein resides in the cytoplasm. The enzyme catalyses tRNA(Leu) + L-leucine + ATP = L-leucyl-tRNA(Leu) + AMP + diphosphate. The polypeptide is Leucine--tRNA ligase (Mesoplasma florum (strain ATCC 33453 / NBRC 100688 / NCTC 11704 / L1) (Acholeplasma florum)).